Reading from the N-terminus, the 1166-residue chain is Myosin-1 (1166 aa).

A compositionally biased stretch (polar residues) spans 1-13 (MSQKVTPFMQSLK). The tract at residues 1-71 (MSQKVTPFMQ…AGDSEDSPYS (71 aa)) is disordered. S14 bears the Phosphoserine mark. The span at 32 to 45 (NSSGASVRLTNSNV) shows a compositional bias: polar residues. The Myosin N-terminal SH3-like domain occupies 112 to 161 (KKILQSWIQLPNGNWELGKILSTSGEESVISLPEGKVIKVISETLVPANP). A Myosin motor domain is found at 165-837 (DGVDDLMQLS…QIGVLEDTRN (673 aa)). Residues 256–263 (GESGAGKT) and 304–312 (NDNSSRFGK) each bind ATP. Actin-binding regions lie at residues 589-623 (LFEKKPLGLLSLLDEESTFPNGTDLTLANKLKQHL) and 717-739 (LFQLMQRLGNTTPHFIRCIKPNN). 4 IQ domains span residues 839 to 868 (TLHGILRVQSSFRGYQARCLLKELKRGISI), 862 to 891 (LKRGISILQSFVRGEKIRKEFAELRRRHKA), 888 to 917 (RHKAAATIQSQVKSKIARIQYKGIADASVV), and 911 to 940 (IADASVVIQSAIRGWLVRRCSGDIGWLKSG). Residues 955 to 1005 (SVLSELQRRVLKAEAALREKEEENDILQQRLQQYENRWSEYETKMKSMEEI) adopt a coiled-coil conformation. Positions 1030–1065 (ARNSDASVNASDATDWDSSSNQFRSQTSNGVGSRLQ) are disordered. A compositionally biased stretch (polar residues) spans 1032 to 1060 (NSDASVNASDATDWDSSSNQFRSQTSNGV).

Belongs to the TRAFAC class myosin-kinesin ATPase superfamily. Myosin family. Plant myosin class VIII subfamily. In terms of assembly, homodimer.

It localises to the cell junction. It is found in the plasmodesma. The protein localises to the cytoplasm. The protein resides in the cytoskeleton. Its subcellular location is the phragmoplast. It localises to the endosome. It is found in the endoplasmic reticulum. Myosin heavy chain that is required for the cell cycle-regulated transport of various organelles and proteins for their segregation. Functions by binding with its tail domain to receptor proteins on organelles and exerting force with its N-terminal motor domain against actin filaments, thereby transporting its cargo along polarized actin cables. Involved in endocytosis via its action in endosomal trafficking. This chain is Myosin-1 (VIII-1), found in Arabidopsis thaliana (Mouse-ear cress).